The following is a 326-amino-acid chain: Virulence-associated V antigen (326 aa).

The protein resides in the secreted. In terms of biological role, possibly involved in calcium regulation of YOP expression, which includes the export process. This Yersinia pestis protein is Virulence-associated V antigen (lcrV).